Consider the following 504-residue polypeptide: Glycerol kinase (504 aa).

ADP is bound at residue T14. ATP-binding residues include T14, T15, and S16. T14 serves as a coordination point for sn-glycerol 3-phosphate. R18 serves as a coordination point for ADP. Residues R84, E85, Y136, and D246 each coordinate sn-glycerol 3-phosphate. 5 residues coordinate glycerol: R84, E85, Y136, D246, and Q247. ADP-binding residues include T268 and G311. Residues T268, G311, Q315, and G412 each contribute to the ATP site. Residues G412 and N416 each coordinate ADP.

This sequence belongs to the FGGY kinase family.

The enzyme catalyses glycerol + ATP = sn-glycerol 3-phosphate + ADP + H(+). It participates in polyol metabolism; glycerol degradation via glycerol kinase pathway; sn-glycerol 3-phosphate from glycerol: step 1/1. With respect to regulation, inhibited by fructose 1,6-bisphosphate (FBP). In terms of biological role, key enzyme in the regulation of glycerol uptake and metabolism. Catalyzes the phosphorylation of glycerol to yield sn-glycerol 3-phosphate. In Aliivibrio fischeri (strain ATCC 700601 / ES114) (Vibrio fischeri), this protein is Glycerol kinase.